The primary structure comprises 84 residues: Trefoil factor 1 (84 aa).

The N-terminal stretch at 1 to 24 is a signal peptide; that stretch reads MATMENKVICALVLVSMLALGTLA. The region spanning 29 to 72 is the P-type domain; it reads ETCTVAPRERQNCGFPGVTPSQCANKGCCFDDTVRGVPWCFYPN. 3 disulfides stabilise this stretch: cysteine 31–cysteine 57, cysteine 41–cysteine 56, and cysteine 51–cysteine 68.

In terms of assembly, heterodimer with GKN2; disulfide linked. In terms of tissue distribution, found in stomach, with highest levels in the upper gastric mucosal cells (at protein level). Detected in goblet cells of the small and large intestine and rectum, small submucosal glands in the esophagus, mucous acini of the sublingual gland, submucosal glands of the trachea, and epithelial cells lining the exocrine pancreatic ducts but not in the remainder of the pancreas (at protein level). Scattered expression is detected in the epithelial cells of the gallbladder and submucosal glands of the vagina, and weak expression is observed in the bronchial goblet cells of the pseudostratified epithelia in the respiratory system (at protein level). Detected in urine (at protein level). Strongly expressed in breast cancer but at low levels in normal mammary tissue. It is regulated by estrogen in MCF-7 cells. Strong expression found in normal gastric mucosa and in the regenerative tissues surrounding ulcerous lesions of gastrointestinal tract, but lower expression found in gastric cancer (at protein level).

It localises to the secreted. In terms of biological role, stabilizer of the mucous gel overlying the gastrointestinal mucosa that provides a physical barrier against various noxious agents. May inhibit the growth of calcium oxalate crystals in urine. In Homo sapiens (Human), this protein is Trefoil factor 1 (TFF1).